The sequence spans 263 residues: Aminoglycoside (3'') (9) adenylyltransferase (263 aa).

The catalysed reaction is streptomycin + ATP = 3''-O-adenylylstreptomycin + diphosphate. It catalyses the reaction spectinomycin + ATP = 9-O-adenylylspectinomycin + diphosphate. Mediates bacterial resistance to the antibiotics streptomycin and spectinomycin. This Escherichia coli protein is Aminoglycoside (3'') (9) adenylyltransferase.